A 425-amino-acid polypeptide reads, in one-letter code: Melibiose permease (425 aa).

Topologically, residues 1–13 are cytoplasmic; the sequence is MNTTTCTHKDNPN. A helical transmembrane segment spans residues 14 to 34; that stretch reads FWIFGLFFFLYFFIMATCFPF. Residues 35–50 are Periplasmic-facing; it reads LPIWLSDIIGLNKTHT. The helical transmembrane segment at 51-71 threads the bilayer; the sequence is GIVFSCISLSAIAFQPVLGVI. Over 72–80 the chain is Cytoplasmic; sequence SDKLGLKKH. Residues 81 to 101 form a helical membrane-spanning segment; it reads LLWIISVLLFLFAPFFLYVFA. Topologically, residues 102–107 are periplasmic; sequence PLLKTN. A helical transmembrane segment spans residues 108 to 128; that stretch reads IWLGALSGGLYIGFVFSAGSG. Topologically, residues 129 to 149 are cytoplasmic; the sequence is AIEAYIERVSRNSAFEYGKAR. Residues 150-170 traverse the membrane as a helical segment; sequence MFGCLGWGLCASTGGILFGID. Proline 171 is a topological domain (periplasmic). Residues 172-192 traverse the membrane as a helical segment; sequence SYVFWMGSAAALLLMLLLVVA. The Cytoplasmic portion of the chain corresponds to 193–227; it reads KPKPNQTAQVMNALGANQPQITAKKVFNLFRQRRM. A helical membrane pass occupies residues 228-248; the sequence is WMFILYVIGVACVYDVFDQQF. At 249-267 the chain is on the periplasmic side; it reads ATFFKTFFATPQEGTRAFG. A helical membrane pass occupies residues 268–288; sequence FATTAGEICNAIIMFCSPWII. The Cytoplasmic segment spans residues 289-297; sequence NRIGAKNTL. The helical transmembrane segment at 298 to 318 threads the bilayer; it reads LIAGLIMATRIIGSSFATTAV. The Periplasmic segment spans residues 319–325; that stretch reads EVIALKM. The helical transmembrane segment at 326-346 threads the bilayer; the sequence is LHALEVPFLLVGAFKYITGVF. Residues 347–353 are Cytoplasmic-facing; the sequence is DTRLSAT. A helical membrane pass occupies residues 354 to 374; it reads IYLIGFQFAKQSAAIFLSAFA. At 375 to 385 the chain is on the periplasmic side; sequence GNMYDRIGFQE. The helical transmembrane segment at 386–406 threads the bilayer; it reads TYLMLGCFVLAITVVSAFTLS. The Cytoplasmic segment spans residues 407–425; sequence SRQEIAAAAGAAALTSQSR.

This sequence belongs to the major facilitator superfamily. Oligosaccharide:H(+) symporter (OHS) (TC 2.A.1.5) family.

It is found in the cell inner membrane. Functionally, responsible for transport of melibiose into the cell, with the concomitant import of a proton (symport system). Can also transport lactose, and has weak activity with maltose. Cannot transport the analog methyl-1-thio-beta,D-galactopyranoside (TMG). In Enterobacter cloacae subsp. cloacae (strain ATCC 13047 / DSM 30054 / NBRC 13535 / NCTC 10005 / WDCM 00083 / NCDC 279-56), this protein is Melibiose permease.